The following is a 92-amino-acid chain: UPF0223 protein EF_2462 (92 aa).

This sequence belongs to the UPF0223 family.

The sequence is that of UPF0223 protein EF_2462 from Enterococcus faecalis (strain ATCC 700802 / V583).